The primary structure comprises 496 residues: Probable cytosol aminopeptidase (496 aa).

The Mn(2+) site is built by Lys266 and Asp271. Residue Lys278 is part of the active site. The Mn(2+) site is built by Asp289, Asp348, and Glu350. Residue Arg352 is part of the active site.

Belongs to the peptidase M17 family. It depends on Mn(2+) as a cofactor.

The protein resides in the cytoplasm. The enzyme catalyses Release of an N-terminal amino acid, Xaa-|-Yaa-, in which Xaa is preferably Leu, but may be other amino acids including Pro although not Arg or Lys, and Yaa may be Pro. Amino acid amides and methyl esters are also readily hydrolyzed, but rates on arylamides are exceedingly low.. The catalysed reaction is Release of an N-terminal amino acid, preferentially leucine, but not glutamic or aspartic acids.. In terms of biological role, presumably involved in the processing and regular turnover of intracellular proteins. Catalyzes the removal of unsubstituted N-terminal amino acids from various peptides. The protein is Probable cytosol aminopeptidase of Stutzerimonas stutzeri (strain A1501) (Pseudomonas stutzeri).